The primary structure comprises 148 residues: Large ribosomal subunit protein uL15 (148 aa).

Positions 1–51 are disordered; that stretch reads MNLSNLKPAEGSTKTRKRIGRGAGSGLGGTSTRGHKGAKSRSGYSKKVGFE. The segment covering 21–31 has biased composition (gly residues); sequence RGAGSGLGGTS.

It belongs to the universal ribosomal protein uL15 family. In terms of assembly, part of the 50S ribosomal subunit.

Its function is as follows. Binds to the 23S rRNA. The protein is Large ribosomal subunit protein uL15 of Bacteroides thetaiotaomicron (strain ATCC 29148 / DSM 2079 / JCM 5827 / CCUG 10774 / NCTC 10582 / VPI-5482 / E50).